A 100-amino-acid chain; its full sequence is uncharacterized protein (100 aa).

The next 3 membrane-spanning stretches (helical) occupy residues 7-28 (TLIGLIVGLLFGLSGIATLLSL), 38-60 (AQLSQLGVASTLVMLVIALILII), and 65-87 (LSALIVGAVIGAVLNLVLQANGV).

The protein localises to the cell membrane. This is an uncharacterized protein from Archaeoglobus fulgidus (strain ATCC 49558 / DSM 4304 / JCM 9628 / NBRC 100126 / VC-16).